Consider the following 254-residue polypeptide: NAD kinase (254 aa).

The active-site Proton acceptor is Asp44. NAD(+) is bound by residues 44–45 (DG), 114–115 (NE), Asp144, Ala152, 155–160 (TAYNYS), and Ala179.

It belongs to the NAD kinase family. Requires a divalent metal cation as cofactor.

It is found in the cytoplasm. It catalyses the reaction NAD(+) + ATP = ADP + NADP(+) + H(+). Involved in the regulation of the intracellular balance of NAD and NADP, and is a key enzyme in the biosynthesis of NADP. Catalyzes specifically the phosphorylation on 2'-hydroxyl of the adenosine moiety of NAD to yield NADP. This Cereibacter sphaeroides (strain ATCC 17029 / ATH 2.4.9) (Rhodobacter sphaeroides) protein is NAD kinase.